Reading from the N-terminus, the 239-residue chain is Cytochrome c oxidase subunit 2 (239 aa).

Over 1–26 (MATPAQLGLMDAASPVMEEMIYFHDH) the chain is Mitochondrial intermembrane. Residues 27–48 (VMLVLILITCLIFYSMLVLISS) traverse the membrane as a helical segment. At 49–62 (KYIYRFLTDGHVIE) the chain is on the mitochondrial matrix side. A helical membrane pass occupies residues 63–82 (TVWTVIPAIILVVVALPSLK). Over 83 to 239 (LLYLTDELDN…ESLGSLNMKR (157 aa)) the chain is Mitochondrial intermembrane. Cu cation is bound by residues His-161, Cys-196, Glu-198, Cys-200, His-204, and Met-207. A Mg(2+)-binding site is contributed by Glu-198.

The protein belongs to the cytochrome c oxidase subunit 2 family. Component of the cytochrome c oxidase (complex IV, CIV), a multisubunit enzyme composed of a catalytic core of 3 subunits and several supernumerary subunits. The complex exists as a monomer or a dimer and forms supercomplexes (SCs) in the inner mitochondrial membrane with ubiquinol-cytochrome c oxidoreductase (cytochrome b-c1 complex, complex III, CIII). Cu cation serves as cofactor.

It is found in the mitochondrion inner membrane. It carries out the reaction 4 Fe(II)-[cytochrome c] + O2 + 8 H(+)(in) = 4 Fe(III)-[cytochrome c] + 2 H2O + 4 H(+)(out). In terms of biological role, component of the cytochrome c oxidase, the last enzyme in the mitochondrial electron transport chain which drives oxidative phosphorylation. The respiratory chain contains 3 multisubunit complexes succinate dehydrogenase (complex II, CII), ubiquinol-cytochrome c oxidoreductase (cytochrome b-c1 complex, complex III, CIII) and cytochrome c oxidase (complex IV, CIV), that cooperate to transfer electrons derived from NADH and succinate to molecular oxygen, creating an electrochemical gradient over the inner membrane that drives transmembrane transport and the ATP synthase. Cytochrome c oxidase is the component of the respiratory chain that catalyzes the reduction of oxygen to water. Electrons originating from reduced cytochrome c in the intermembrane space (IMS) are transferred via the dinuclear copper A center (CU(A)) of subunit 2 and heme A of subunit 1 to the active site in subunit 1, a binuclear center (BNC) formed by heme A3 and copper B (CU(B)). The BNC reduces molecular oxygen to 2 water molecules using 4 electrons from cytochrome c in the IMS and 4 protons from the mitochondrial matrix. In Branchiostoma lanceolatum (Common lancelet), this protein is Cytochrome c oxidase subunit 2 (COII).